Here is an 87-residue protein sequence, read N- to C-terminus: Envelope glycoprotein N (87 aa).

Positions 1-24 (MGSITASFILITMQILFFCEDSSG) are cleaved as a signal peptide. Residues 25–48 (EPNFAERNFWHASCSARGVYIDGS) are Virion surface-facing. Residues 49-69 (MITTLFFYASLLGVCVALISL) form a helical membrane-spanning segment. The Intravirion portion of the chain corresponds to 70–87 (AYHACFRLFTRSVLRSTW).

It belongs to the herpesviridae glycoprotein N family. Interacts (via N-terminus) with gM (via N-terminus). The gM-gN heterodimer forms the gCII complex.

The protein localises to the virion membrane. Its subcellular location is the host membrane. The protein resides in the host Golgi apparatus. It localises to the host trans-Golgi network. In terms of biological role, envelope glycoprotein necessary for proper maturation of gM and modulation of its membrane fusion activity. Also plays a critical role in virion morphogenesis. This is Envelope glycoprotein N from Varicella-zoster virus (strain Dumas) (HHV-3).